A 222-amino-acid chain; its full sequence is MSSSESIRMVLIGPPGAGKGTQAPNLQERFHAAHLATGDMLRSQIAKGTQLGLEAKKIMDQGGLVSDDIMVNMIKDELTNNPACKNGFILDGFPRTIPQAEKLDQMLKEQGTPLEKAIELKVDDELLVARITGRLIHPASGRSYHKIFNPPKEDMKDDVTGEALVQRSDDNADALKKRLAAYHAQTEPIVDFYKKTGIWAGVDASQPPATVWADILNKLGKD.

Residue Ser2 is a propeptide, removed in mature form. Ser2 and Ser3 each carry N-acetylserine. 16 to 21 (GAGKGT) provides a ligand contact to ATP. Positions 36 to 65 (ATGDMLRSQIAKGTQLGLEAKKIMDQGGLV) are NMP. AMP contacts are provided by residues Thr37, Arg42, 63-65 (GLV), 92-95 (GFPR), and Gln99. The segment at 133-170 (GRLIHPASGRSYHKIFNPPKEDMKDDVTGEALVQRSDD) is LID. ATP contacts are provided by residues Arg134 and 143–144 (SY). AMP contacts are provided by Arg167 and Arg178. ATP is bound at residue Gln206.

This sequence belongs to the adenylate kinase family. AK2 subfamily. As to quaternary structure, monomer.

The protein resides in the cytoplasm. It localises to the cytosol. It is found in the mitochondrion intermembrane space. The enzyme catalyses AMP + ATP = 2 ADP. Functionally, catalyzes the reversible transfer of the terminal phosphate group between ATP and AMP. Plays an important role in cellular energy homeostasis and in adenine nucleotide metabolism. Adenylate kinase activity is critical for regulation of the phosphate utilization and the AMP de novo biosynthesis pathways. This Saccharomyces cerevisiae (strain RM11-1a) (Baker's yeast) protein is Adenylate kinase.